The primary structure comprises 101 residues: Small ribosomal subunit protein uS14 (101 aa).

Residues 1 to 10 show a composition bias toward basic and acidic residues; that stretch reads MAKKSSIEKN. Positions 1 to 25 are disordered; sequence MAKKSSIEKNNRRKKMAKNAAPKRE.

This sequence belongs to the universal ribosomal protein uS14 family. In terms of assembly, part of the 30S ribosomal subunit. Contacts proteins S3 and S10.

Binds 16S rRNA, required for the assembly of 30S particles and may also be responsible for determining the conformation of the 16S rRNA at the A site. The polypeptide is Small ribosomal subunit protein uS14 (Rhodopseudomonas palustris (strain BisA53)).